The following is a 153-amino-acid chain: Small ribosomal subunit protein uS13 (153 aa).

A disordered region spans residues 132–153 (VRGQRTRSHHRKGRTVGVIKKK). A compositionally biased stretch (basic residues) spans 135–153 (QRTRSHHRKGRTVGVIKKK).

The protein belongs to the universal ribosomal protein uS13 family. Part of the 30S ribosomal subunit. Forms a loose heterodimer with protein S19. Forms two bridges to the 50S subunit in the 70S ribosome.

Its function is as follows. Located at the top of the head of the 30S subunit, it contacts several helices of the 16S rRNA. In the 70S ribosome it contacts the 23S rRNA (bridge B1a) and protein L5 of the 50S subunit (bridge B1b), connecting the 2 subunits; these bridges are implicated in subunit movement. This Nanoarchaeum equitans (strain Kin4-M) protein is Small ribosomal subunit protein uS13.